The primary structure comprises 239 residues: Pyridoxine 5'-phosphate synthase (239 aa).

Asn7 serves as a coordination point for 3-amino-2-oxopropyl phosphate. 9 to 10 (DH) provides a ligand contact to 1-deoxy-D-xylulose 5-phosphate. Arg18 contributes to the 3-amino-2-oxopropyl phosphate binding site. Catalysis depends on His43, which acts as the Proton acceptor. 1-deoxy-D-xylulose 5-phosphate is bound by residues Arg45 and His50. Residue Glu70 is the Proton acceptor of the active site. Thr100 is a 1-deoxy-D-xylulose 5-phosphate binding site. The active-site Proton donor is the His191. Residues Gly192 and 213–214 (GH) contribute to the 3-amino-2-oxopropyl phosphate site.

Belongs to the PNP synthase family. As to quaternary structure, homooctamer; tetramer of dimers.

It localises to the cytoplasm. It carries out the reaction 3-amino-2-oxopropyl phosphate + 1-deoxy-D-xylulose 5-phosphate = pyridoxine 5'-phosphate + phosphate + 2 H2O + H(+). It functions in the pathway cofactor biosynthesis; pyridoxine 5'-phosphate biosynthesis; pyridoxine 5'-phosphate from D-erythrose 4-phosphate: step 5/5. Its function is as follows. Catalyzes the complicated ring closure reaction between the two acyclic compounds 1-deoxy-D-xylulose-5-phosphate (DXP) and 3-amino-2-oxopropyl phosphate (1-amino-acetone-3-phosphate or AAP) to form pyridoxine 5'-phosphate (PNP) and inorganic phosphate. The protein is Pyridoxine 5'-phosphate synthase of Nostoc sp. (strain PCC 7120 / SAG 25.82 / UTEX 2576).